The sequence spans 259 residues: Deoxyribose-phosphate aldolase (259 aa).

Residue Asp-102 is the Proton donor/acceptor of the active site. Lys-167 functions as the Schiff-base intermediate with acetaldehyde in the catalytic mechanism. Residue Lys-201 is the Proton donor/acceptor of the active site.

It belongs to the DeoC/FbaB aldolase family. DeoC type 2 subfamily.

The protein localises to the cytoplasm. It carries out the reaction 2-deoxy-D-ribose 5-phosphate = D-glyceraldehyde 3-phosphate + acetaldehyde. Its pathway is carbohydrate degradation; 2-deoxy-D-ribose 1-phosphate degradation; D-glyceraldehyde 3-phosphate and acetaldehyde from 2-deoxy-alpha-D-ribose 1-phosphate: step 2/2. Functionally, catalyzes a reversible aldol reaction between acetaldehyde and D-glyceraldehyde 3-phosphate to generate 2-deoxy-D-ribose 5-phosphate. This Photorhabdus laumondii subsp. laumondii (strain DSM 15139 / CIP 105565 / TT01) (Photorhabdus luminescens subsp. laumondii) protein is Deoxyribose-phosphate aldolase.